The sequence spans 87 residues: Cell division topological specificity factor (87 aa).

It belongs to the MinE family.

Its function is as follows. Prevents the cell division inhibition by proteins MinC and MinD at internal division sites while permitting inhibition at polar sites. This ensures cell division at the proper site by restricting the formation of a division septum at the midpoint of the long axis of the cell. This is Cell division topological specificity factor from Clostridium botulinum (strain ATCC 19397 / Type A).